Consider the following 670-residue polypeptide: DNA topoisomerase 6 subunit B (670 aa).

The tract at residues 1–30 (MAGDDLVETKKGSSKNSKDSNESKLKQKSP) is disordered. Residues 7 to 25 (VETKKGSSKNSKDSNESKL) show a composition bias toward basic and acidic residues. ATP contacts are provided by residues N60, D160, 181–182 (TK), 190–197 (GKFGLGAK), and K516.

It belongs to the TOP6B family. In terms of assembly, homodimer. Heterotetramer of two TOP6A and two TOP6B subunits. Interacts with SPO11-2, but not with SPO11-1, RHL1 or BIN4. As to expression, highly expressed in leaves, stems, flowers and seedlings.

The protein resides in the nucleus. The enzyme catalyses ATP-dependent breakage, passage and rejoining of double-stranded DNA.. Functionally, component of the DNA topoisomerase VI involved in chromatin organization and progression of endoreduplication cycles. Relaxes both positive and negative superturns and exhibits a strong decatenase activity. The B subunit binds ATP. Involved in cell-elongation processes. This Arabidopsis thaliana (Mouse-ear cress) protein is DNA topoisomerase 6 subunit B.